The sequence spans 150 residues: 3-dehydroquinate dehydratase (150 aa).

The active-site Proton acceptor is tyrosine 23. 3 residues coordinate substrate: asparagine 75, histidine 81, and aspartate 88. The active-site Proton donor is the histidine 101. Substrate-binding positions include 102 to 103 and arginine 112; that span reads LS.

This sequence belongs to the type-II 3-dehydroquinase family. Homododecamer.

The enzyme catalyses 3-dehydroquinate = 3-dehydroshikimate + H2O. It functions in the pathway metabolic intermediate biosynthesis; chorismate biosynthesis; chorismate from D-erythrose 4-phosphate and phosphoenolpyruvate: step 3/7. Its function is as follows. Catalyzes a trans-dehydration via an enolate intermediate. The sequence is that of 3-dehydroquinate dehydratase from Pseudomonas savastanoi pv. phaseolicola (strain 1448A / Race 6) (Pseudomonas syringae pv. phaseolicola (strain 1448A / Race 6)).